Consider the following 395-residue polypeptide: Imidazolonepropionase (395 aa).

The Fe(3+) site is built by histidine 63 and histidine 65. 2 residues coordinate Zn(2+): histidine 63 and histidine 65. 3 residues coordinate 4-imidazolone-5-propanoate: arginine 72, tyrosine 135, and histidine 168. An N-formimidoyl-L-glutamate-binding site is contributed by tyrosine 135. Histidine 233 is a Fe(3+) binding site. Histidine 233 contacts Zn(2+). 4-imidazolone-5-propanoate is bound at residue glutamine 236. Aspartate 308 is a Fe(3+) binding site. Aspartate 308 is a Zn(2+) binding site. Residues asparagine 310 and glycine 312 each coordinate N-formimidoyl-L-glutamate. Threonine 313 is a binding site for 4-imidazolone-5-propanoate.

Belongs to the metallo-dependent hydrolases superfamily. HutI family. Zn(2+) is required as a cofactor. Fe(3+) serves as cofactor.

The protein resides in the cytoplasm. It carries out the reaction 4-imidazolone-5-propanoate + H2O = N-formimidoyl-L-glutamate. Its pathway is amino-acid degradation; L-histidine degradation into L-glutamate; N-formimidoyl-L-glutamate from L-histidine: step 3/3. Catalyzes the hydrolytic cleavage of the carbon-nitrogen bond in imidazolone-5-propanoate to yield N-formimidoyl-L-glutamate. It is the third step in the universal histidine degradation pathway. This is Imidazolonepropionase from Cereibacter sphaeroides (strain ATCC 17023 / DSM 158 / JCM 6121 / CCUG 31486 / LMG 2827 / NBRC 12203 / NCIMB 8253 / ATH 2.4.1.) (Rhodobacter sphaeroides).